The chain runs to 447 residues: Neuronal acetylcholine receptor subunit alpha-10 (447 aa).

The N-terminal stretch at 1 to 24 is a signal peptide; that stretch reads MGTRSHYLDLGFLLLLFLPAECLG. Residues 25–237 are Extracellular-facing; that stretch reads AEGRLAHKLF…FTLLLRRRAA (213 aa). N-linked (GlcNAc...) asparagine glycans are attached at residues Asn40 and Asn56. 2 disulfide bridges follow: Cys154-Cys168 and Cys218-Cys219. Transmembrane regions (helical) follow at residues 238-258, 268-288, and 302-322; these read AYVCNLLLPCVFISLLAPLAF, VSLGVTVLLALTVFQLILAES, and YMATMTMVTFSTALTILIMNL. Residues 323–425 lie on the Cytoplasmic side of the membrane; that stretch reads HYCGPNAHPV…WKRLARVMDR (103 aa). Residues 426–446 traverse the membrane as a helical segment; it reads FFLGIFFCMALVMSLIVLVQA.

This sequence belongs to the ligand-gated ion channel (TC 1.A.9) family. Acetylcholine receptor (TC 1.A.9.1) subfamily. Alpha-10/CHRNA10 sub-subfamily. Forms homo- or heterooligomeric channels in conjunction with CHRNA10. The native outer hair cell receptor may be composed of CHRNA9:CHRNA10 heterooligomers. Found in the stoichiometric form (CHRNA9)2:(CHRNA10)3. In terms of tissue distribution, expressed in the outer hair cells of the cochlea and the neurons of dorsal root ganglia.

It localises to the synaptic cell membrane. Its subcellular location is the cell membrane. It catalyses the reaction Ca(2+)(in) = Ca(2+)(out). The catalysed reaction is Mg(2+)(in) = Mg(2+)(out). The enzyme catalyses K(+)(in) = K(+)(out). It carries out the reaction Na(+)(in) = Na(+)(out). With respect to regulation, activated by a myriad of ligands such as acetylcholine. AChR activity is inhibited by the antagonist alpha-conotoxins RgIA and GeXXA, small disulfide-constrained peptides from cone snails. Functionally, component of neuronal acetylcholine receptors (nAChRs) that function as pentameric, ligand-gated cation channels with high calcium permeability among other activities. nAChRs are excitatory neurotrasnmitter receptors formed by a collection of nAChR subunits known to mediate synaptic transmission in the nervous system and the neuromuscular junction. Each nAchR subunit confers differential attributes to channel properties, including activation, deactivation and desensitization kinetics, pH sensitivity, cation permeability, and binding to allosteric modulators. Forms heteropentamers with CHRNA9. Expressed in the inner ear, in sympathetic neurons and in other non-neuronal cells, such as skin keratinocytes and lymphocytes. nAChR formed by CHRNA9:CHRNA10 mediate central nervous system control of auditory and vestibular sensory processing. The channel is permeable to a range of divalent cations including calcium, the influx of which may activate a potassium current which hyperpolarizes the cell membrane. In the ear, mediates synaptic transmission between efferent olivocochlear fibers and hair cells of the cochlea, this may lead to a reduction in basilar membrane motion, altering the activity of auditory nerve fibers and reducing the range of dynamic hearing. This may protect against acoustic trauma. May also regulate keratinocyte adhesion. This chain is Neuronal acetylcholine receptor subunit alpha-10 (Chrna10), found in Rattus norvegicus (Rat).